The following is a 496-amino-acid chain: UDP-N-acetylmuramoyl-L-alanyl-D-glutamate--2,6-diaminopimelate ligase (496 aa).

UDP-N-acetyl-alpha-D-muramoyl-L-alanyl-D-glutamate is bound by residues Leu-29 and Ser-31. Residue 118–124 (GTNGKTT) participates in ATP binding. Residues Asn-159, 160-161 (TT), Ser-187, Gln-193, and Arg-195 each bind UDP-N-acetyl-alpha-D-muramoyl-L-alanyl-D-glutamate. Position 227 is an N6-carboxylysine (Lys-227). Residues Arg-392, 416–419 (DNPR), Gly-467, and Glu-471 each bind meso-2,6-diaminopimelate. A Meso-diaminopimelate recognition motif motif is present at residues 416-419 (DNPR).

It belongs to the MurCDEF family. MurE subfamily. Mg(2+) is required as a cofactor. Carboxylation is probably crucial for Mg(2+) binding and, consequently, for the gamma-phosphate positioning of ATP.

Its subcellular location is the cytoplasm. The enzyme catalyses UDP-N-acetyl-alpha-D-muramoyl-L-alanyl-D-glutamate + meso-2,6-diaminopimelate + ATP = UDP-N-acetyl-alpha-D-muramoyl-L-alanyl-gamma-D-glutamyl-meso-2,6-diaminopimelate + ADP + phosphate + H(+). Its pathway is cell wall biogenesis; peptidoglycan biosynthesis. Its function is as follows. Catalyzes the addition of meso-diaminopimelic acid to the nucleotide precursor UDP-N-acetylmuramoyl-L-alanyl-D-glutamate (UMAG) in the biosynthesis of bacterial cell-wall peptidoglycan. The protein is UDP-N-acetylmuramoyl-L-alanyl-D-glutamate--2,6-diaminopimelate ligase of Wigglesworthia glossinidia brevipalpis.